Here is a 154-residue protein sequence, read N- to C-terminus: Major allergen Api g 1, isoallergen 1 (154 aa).

The protein belongs to the BetVI family.

The polypeptide is Major allergen Api g 1, isoallergen 1 (Apium graveolens (Celery)).